A 715-amino-acid polypeptide reads, in one-letter code: Dynein axonemal intermediate chain 7 (715 aa).

Residues 291–322 (AVSKDLQEENKQENESNSVHEEETKAEGQGDV) are disordered. Residues 295–318 (DLQEENKQENESNSVHEEETKAEG) show a composition bias toward basic and acidic residues.

Belongs to the DNAI7 family. Part of the multisubunit axonemal dynein complex formed at least of two heavy chains and a number of intermediate and light chains. Associates with tubulin. Interacts with microtubule. Post-translationally, ubiquitinated. Ubiquitination leads to its degradation through the 26S proteasome. Ubiquitin-proteasome-mediated DNAI7 degradation occurs in mitosis.

It localises to the cell projection. The protein localises to the cilium. The protein resides in the cytoplasm. In terms of biological role, via its association with the multisubunit axonemal dynein complex, is potentially involved in the regulation of cilia function. May act as a cell cycle regulator. This is Dynein axonemal intermediate chain 7 from Bos taurus (Bovine).